Consider the following 597-residue polypeptide: Elongation factor 4 (597 aa).

The tr-type G domain occupies 2 to 184; sequence DHIRNFSIIA…SLIAKVPPPK (183 aa). GTP-binding positions include 14–19 and 131–134; these read DHGKST and NKID.

This sequence belongs to the TRAFAC class translation factor GTPase superfamily. Classic translation factor GTPase family. LepA subfamily.

It is found in the cell inner membrane. It carries out the reaction GTP + H2O = GDP + phosphate + H(+). In terms of biological role, required for accurate and efficient protein synthesis under certain stress conditions. May act as a fidelity factor of the translation reaction, by catalyzing a one-codon backward translocation of tRNAs on improperly translocated ribosomes. Back-translocation proceeds from a post-translocation (POST) complex to a pre-translocation (PRE) complex, thus giving elongation factor G a second chance to translocate the tRNAs correctly. Binds to ribosomes in a GTP-dependent manner. The polypeptide is Elongation factor 4 (Burkholderia ambifaria (strain MC40-6)).